A 466-amino-acid polypeptide reads, in one-letter code: DNA repair protein RadA (466 aa).

The C4-type zinc finger occupies 12–29 (CSECQHVAPKWVGRCANC). Residue 100 to 107 (GDPGVGKS) coordinates ATP. Positions 261–265 (KNRFG) match the RadA KNRFG motif motif. The lon-protease-like stretch occupies residues 359 to 466 (DLYLSTVGGM…MREIAIAGAQ (108 aa)).

The protein belongs to the RecA family. RadA subfamily. Interacts with DisA.

Its function is as follows. DNA-dependent ATPase involved in processing of recombination intermediates, plays a role in repairing DNA breaks. Stimulates the branch migration of RecA-mediated strand transfer reactions, allowing the 3' invading strand to extend heteroduplex DNA faster. Binds ssDNA in the presence of ADP but not other nucleotides, has ATPase activity that is stimulated by ssDNA and various branched DNA structures, but inhibited by SSB. Does not have RecA's homology-searching function. Also inhibits the diadenylate cyclase activity of DisA. The sequence is that of DNA repair protein RadA from Mycolicibacterium smegmatis (strain ATCC 700084 / mc(2)155) (Mycobacterium smegmatis).